Consider the following 412-residue polypeptide: Phosphoglycerate kinase (412 aa).

Residues 24 to 26, R47, 70 to 73, R130, and R167 contribute to the substrate site; these read DLN and HLGR. Residues K217, G312, E343, and 369-372 each bind ATP; that span reads GGDS.

The protein belongs to the phosphoglycerate kinase family. As to quaternary structure, monomer.

The protein resides in the cytoplasm. It catalyses the reaction (2R)-3-phosphoglycerate + ATP = (2R)-3-phospho-glyceroyl phosphate + ADP. It functions in the pathway carbohydrate degradation; glycolysis; pyruvate from D-glyceraldehyde 3-phosphate: step 2/5. The chain is Phosphoglycerate kinase from Kineococcus radiotolerans (strain ATCC BAA-149 / DSM 14245 / SRS30216).